The following is a 202-amino-acid chain: Pyridoxal 5'-phosphate synthase subunit PdxT (202 aa).

48–50 provides a ligand contact to L-glutamine; the sequence is GES. Catalysis depends on cysteine 80, which acts as the Nucleophile. L-glutamine contacts are provided by residues arginine 112 and 139-140; that span reads IR. Residues histidine 180 and glutamate 182 each act as charge relay system in the active site.

The protein belongs to the glutaminase PdxT/SNO family. In terms of assembly, in the presence of PdxS, forms a dodecamer of heterodimers. Only shows activity in the heterodimer.

It carries out the reaction aldehydo-D-ribose 5-phosphate + D-glyceraldehyde 3-phosphate + L-glutamine = pyridoxal 5'-phosphate + L-glutamate + phosphate + 3 H2O + H(+). It catalyses the reaction L-glutamine + H2O = L-glutamate + NH4(+). It participates in cofactor biosynthesis; pyridoxal 5'-phosphate biosynthesis. In terms of biological role, catalyzes the hydrolysis of glutamine to glutamate and ammonia as part of the biosynthesis of pyridoxal 5'-phosphate. The resulting ammonia molecule is channeled to the active site of PdxS. This is Pyridoxal 5'-phosphate synthase subunit PdxT from Hyperthermus butylicus (strain DSM 5456 / JCM 9403 / PLM1-5).